A 676-amino-acid chain; its full sequence is UvrABC system protein B (676 aa).

The region spanning 26 to 414 is the Helicase ATP-binding domain; that stretch reads EGLDAGLAHQ…SAGEIADQVV (389 aa). ATP is bound at residue 39–46; that stretch reads GVTGSGKT. The Beta-hairpin signature appears at 92–115; that stretch reads YYDYYQPEAYVPTTDTFIEKDASV. Residues 432 to 598 enclose the Helicase C-terminal domain; sequence QVDDLLSEIR…ALKRNIKDIM (167 aa). The region spanning 636 to 671 is the UVR domain; the sequence is EKEISRLEAAMYQHAQDLEFELAAEKRDEIEKLRAQ.

It belongs to the UvrB family. In terms of assembly, forms a heterotetramer with UvrA during the search for lesions. Interacts with UvrC in an incision complex.

It localises to the cytoplasm. Functionally, the UvrABC repair system catalyzes the recognition and processing of DNA lesions. A damage recognition complex composed of 2 UvrA and 2 UvrB subunits scans DNA for abnormalities. Upon binding of the UvrA(2)B(2) complex to a putative damaged site, the DNA wraps around one UvrB monomer. DNA wrap is dependent on ATP binding by UvrB and probably causes local melting of the DNA helix, facilitating insertion of UvrB beta-hairpin between the DNA strands. Then UvrB probes one DNA strand for the presence of a lesion. If a lesion is found the UvrA subunits dissociate and the UvrB-DNA preincision complex is formed. This complex is subsequently bound by UvrC and the second UvrB is released. If no lesion is found, the DNA wraps around the other UvrB subunit that will check the other stand for damage. This is UvrABC system protein B from Vibrio parahaemolyticus serotype O3:K6 (strain RIMD 2210633).